Consider the following 408-residue polypeptide: Imidazolonepropionase (408 aa).

Residues His-73 and His-75 each coordinate Fe(3+). Zn(2+) contacts are provided by His-73 and His-75. 4-imidazolone-5-propanoate contacts are provided by Arg-82, Tyr-145, and His-178. Tyr-145 serves as a coordination point for N-formimidoyl-L-glutamate. His-243 is a binding site for Fe(3+). His-243 is a Zn(2+) binding site. Gln-246 contributes to the 4-imidazolone-5-propanoate binding site. Asp-318 provides a ligand contact to Fe(3+). Zn(2+) is bound at residue Asp-318. The N-formimidoyl-L-glutamate site is built by Asn-320 and Gly-322. Residue Ser-323 coordinates 4-imidazolone-5-propanoate.

It belongs to the metallo-dependent hydrolases superfamily. HutI family. It depends on Zn(2+) as a cofactor. Fe(3+) is required as a cofactor.

The protein localises to the cytoplasm. The enzyme catalyses 4-imidazolone-5-propanoate + H2O = N-formimidoyl-L-glutamate. The protein operates within amino-acid degradation; L-histidine degradation into L-glutamate; N-formimidoyl-L-glutamate from L-histidine: step 3/3. In terms of biological role, catalyzes the hydrolytic cleavage of the carbon-nitrogen bond in imidazolone-5-propanoate to yield N-formimidoyl-L-glutamate. It is the third step in the universal histidine degradation pathway. This Shewanella oneidensis (strain ATCC 700550 / JCM 31522 / CIP 106686 / LMG 19005 / NCIMB 14063 / MR-1) protein is Imidazolonepropionase.